We begin with the raw amino-acid sequence, 190 residues long: Elongation factor P 2 (190 aa).

The protein belongs to the elongation factor P family.

The protein resides in the cytoplasm. The protein operates within protein biosynthesis; polypeptide chain elongation. Its function is as follows. Involved in peptide bond synthesis. Stimulates efficient translation and peptide-bond synthesis on native or reconstituted 70S ribosomes in vitro. Probably functions indirectly by altering the affinity of the ribosome for aminoacyl-tRNA, thus increasing their reactivity as acceptors for peptidyl transferase. The sequence is that of Elongation factor P 2 (efp2) from Chlamydia caviae (strain ATCC VR-813 / DSM 19441 / 03DC25 / GPIC) (Chlamydophila caviae).